Reading from the N-terminus, the 603-residue chain is Nuclear receptor subfamily 2 group C member 1 (603 aa).

Residues 1-178 (MATIEEIAHQ…RLQRCIAFGM (178 aa)) form a required for interaction with KAT2B region. Residues 110–185 (FDLCVVCGDK…FGMKQDSVQC (76 aa)) constitute a DNA-binding region (nuclear receptor). 2 consecutive NR C4-type zinc fingers follow at residues 113 to 133 (CVVC…CEGC) and 149 to 173 (CRGS…LQRC). 2 positions are modified to phosphoserine: Ser197 and Ser215. Thr220 carries the phosphothreonine modification. Thr222 is subject to Phosphothreonine; by MAPK1. A Glycyl lysine isopeptide (Lys-Gly) (interchain with G-Cter in SUMO2) cross-link involves residue Lys250. One can recognise an NR LBD domain in the interval 348–590 (GSVHLITGDS…SVIPHILKME (243 aa)). A Phosphoserine; by PKC modification is found at Ser581. The tract at residues 584–603 (PHILKMEPADYNSQIIGHSI) is required for interaction with NRIP1. Residue Lys588 forms a Glycyl lysine isopeptide (Lys-Gly) (interchain with G-Cter in SUMO2) linkage.

It belongs to the nuclear hormone receptor family. NR2 subfamily. As to quaternary structure, homodimer. Heterodimer; binds DNA as a heterodimer with NR2C2 required for chromatin remodeling and for binding to promoter regions such as globin DR1 repeats. Interacts with NRIP1 (via its LXXLL motifs); the interaction provides corepressor activity. Interacts with HDAC3 (via the DNA-binding domain). Interacts with HDAC4 (via the DNA-binding domain). Interacts with PIAS1; the interaction is required for sumoylation of NR2C1. Interacts with UBE2I; the interaction is required for sumoylation of NR2C1. Interacts with KAT2B; the interaction acts as a corepressor of gene expression. Interacts with ESR1; the interaction prevents homodimerization of ESR1 and suppresses its transcriptional activity and cell growth. In terms of processing, sumoylation requires both PIAS1 and UBE2I. Sumoylation appears to dissociate NR2C1 from the PML nuclear bodies. Enhances the interaction with NRIP1 but inhibits interaction with KAT2B. In proliferating cells, stimulation by all-trans retinoic acid, activation of MAPK1-mediated phosphorylation and recruitment to PML bodies with subsequent sumoylation, suppresses OCT4 expression. Post-translationally, phosphorylated on several serine and threonine residues. Phosphorylation on Thr-222, stimulated by all-trans retinoic acid (atRA) mediates PML location and sumoylation in proliferating cells which then modulates its association with effector molecules, KAT2B and NRIP1. Phosphorylation on Ser-581 by PKC is important for protein stability and function as activator of RARB.

It localises to the nucleus. The protein localises to the PML body. In terms of biological role, orphan nuclear receptor. Binds the IR7 element in the promoter of its own gene in an autoregulatory negative feedback mechanism. Primarily repressor of a broad range of genes. Binds to hormone response elements (HREs) consisting of two 5'-AGGTCA-3' half site direct repeat consensus sequences. Together with NR2C2, forms the core of the DRED (direct repeat erythroid-definitive) complex that represses embryonic and fetal globin transcription. Also activator of OCT4 gene expression. May be involved in stem cell proliferation and differentiation. Mediator of retinoic acid-regulated preadipocyte proliferation. The chain is Nuclear receptor subfamily 2 group C member 1 (NR2C1) from Homo sapiens (Human).